The chain runs to 254 residues: Type III pantothenate kinase (254 aa).

6-13 contacts ATP; it reads DVGNTNTV. Substrate-binding positions include Tyr100 and 107 to 110; that span reads GADR. Catalysis depends on Asp109, which acts as the Proton acceptor. Residue Asp129 participates in K(+) binding. Residue Thr132 coordinates ATP. Residue Thr184 participates in substrate binding.

The protein belongs to the type III pantothenate kinase family. In terms of assembly, homodimer. NH4(+) serves as cofactor. K(+) is required as a cofactor.

It localises to the cytoplasm. The enzyme catalyses (R)-pantothenate + ATP = (R)-4'-phosphopantothenate + ADP + H(+). Its pathway is cofactor biosynthesis; coenzyme A biosynthesis; CoA from (R)-pantothenate: step 1/5. In terms of biological role, catalyzes the phosphorylation of pantothenate (Pan), the first step in CoA biosynthesis. This Syntrophus aciditrophicus (strain SB) protein is Type III pantothenate kinase.